The chain runs to 473 residues: GTPase Der (473 aa).

EngA-type G domains follow at residues 3 to 167 and 203 to 378; these read FTVA…GEDR and LRVA…KVWN. Residues 9 to 16, 56 to 60, 119 to 122, 209 to 216, 256 to 260, and 321 to 324 contribute to the GTP site; these read GRPNVGKS, DTAGL, NKSE, GRPNAGKS, DTAGM, and NKWD. The region spanning 379 to 463 is the KH-like domain; that stretch reads KRISTARLNR…PIRIHFRSPD (85 aa).

It belongs to the TRAFAC class TrmE-Era-EngA-EngB-Septin-like GTPase superfamily. EngA (Der) GTPase family. As to quaternary structure, associates with the 50S ribosomal subunit.

Its function is as follows. GTPase that plays an essential role in the late steps of ribosome biogenesis. In Rhizobium johnstonii (strain DSM 114642 / LMG 32736 / 3841) (Rhizobium leguminosarum bv. viciae), this protein is GTPase Der.